A 353-amino-acid chain; its full sequence is Protein CYTOKININ-RESPONSIVE GATA TRANSCRIPTION FACTOR 1 (353 aa).

Residues 137 to 144 (IRKGAATD) carry the Nuclear localization signal 1 motif. The segment at 142–166 (ATDPEGGAVRKPRRRAQAHQDESQQ) is disordered. The segment at 178 to 203 (CSDCNTTKTPLWRSGPCGPKSLCNAC) adopts a GATA-type zinc-finger fold. Residues 244–251 (EKRAADVD) carry the Nuclear localization signal 2 motif.

The protein belongs to the type IV zinc-finger family. Class B subfamily. In terms of tissue distribution, mostly expressed in leaves and stems, and, at low levels, in roots.

The protein resides in the nucleus. Its function is as follows. Transcriptional regulator that specifically binds 5'-GATA-3' or 5'-GAT-3' motifs within gene promoters. Influences the expression of nuclear encoded chloroplast-targeted genes. Regulates chloroplast development and promotes chlorophyll accumulation. Modulates plant architecture (e.g. height, length and width of leaf blades, and flowering tillers production) and represses tillering, probably by modulating number of cells. Promotes senescence. Involved in grain filling, panicle development and starch production. This is Protein CYTOKININ-RESPONSIVE GATA TRANSCRIPTION FACTOR 1 from Oryza sativa subsp. japonica (Rice).